The sequence spans 268 residues: Nickel import ATP-binding protein NikE (268 aa).

Residues leucine 4 to asparagine 252 enclose the ABC transporter domain. Glycine 45–serine 52 contributes to the ATP binding site.

This sequence belongs to the ABC transporter superfamily. Nickel importer (TC 3.A.1.5.3) family. As to quaternary structure, the complex is composed of two ATP-binding proteins (NikD and NikE), two transmembrane proteins (NikB and NikC) and a solute-binding protein (NikA).

It localises to the cell inner membrane. It catalyses the reaction Ni(2+)(out) + ATP + H2O = Ni(2+)(in) + ADP + phosphate + H(+). Part of the ABC transporter complex NikABCDE involved in nickel import. Responsible for energy coupling to the transport system. The sequence is that of Nickel import ATP-binding protein NikE from Shigella boydii serotype 4 (strain Sb227).